A 211-amino-acid polypeptide reads, in one-letter code: ATP-dependent Clp protease proteolytic subunit (211 aa).

The active-site Nucleophile is S106. H131 is an active-site residue.

The protein belongs to the peptidase S14 family. Fourteen ClpP subunits assemble into 2 heptameric rings which stack back to back to give a disk-like structure with a central cavity, resembling the structure of eukaryotic proteasomes.

It localises to the cytoplasm. The enzyme catalyses Hydrolysis of proteins to small peptides in the presence of ATP and magnesium. alpha-casein is the usual test substrate. In the absence of ATP, only oligopeptides shorter than five residues are hydrolyzed (such as succinyl-Leu-Tyr-|-NHMec, and Leu-Tyr-Leu-|-Tyr-Trp, in which cleavage of the -Tyr-|-Leu- and -Tyr-|-Trp bonds also occurs).. Cleaves peptides in various proteins in a process that requires ATP hydrolysis. Has a chymotrypsin-like activity. Plays a major role in the degradation of misfolded proteins. This chain is ATP-dependent Clp protease proteolytic subunit, found in Maricaulis maris (strain MCS10) (Caulobacter maris).